Here is a 292-residue protein sequence, read N- to C-terminus: Elongation factor Ts (292 aa).

Residues T81–V84 form an involved in Mg(2+) ion dislocation from EF-Tu region.

The protein belongs to the EF-Ts family.

It localises to the cytoplasm. Associates with the EF-Tu.GDP complex and induces the exchange of GDP to GTP. It remains bound to the aminoacyl-tRNA.EF-Tu.GTP complex up to the GTP hydrolysis stage on the ribosome. The sequence is that of Elongation factor Ts from Psychromonas ingrahamii (strain DSM 17664 / CCUG 51855 / 37).